We begin with the raw amino-acid sequence, 211 residues long: Cytochrome c biogenesis ATP-binding export protein CcmA (211 aa).

Positions 6–211 (LQTVALACER…RDIDLGNWAV (206 aa)) constitute an ABC transporter domain. ATP is bound at residue 38–45 (GPNGSGKT).

It belongs to the ABC transporter superfamily. CcmA exporter (TC 3.A.1.107) family. The complex is composed of two ATP-binding proteins (CcmA) and two transmembrane proteins (CcmB).

Its subcellular location is the cell inner membrane. It carries out the reaction heme b(in) + ATP + H2O = heme b(out) + ADP + phosphate + H(+). In terms of biological role, part of the ABC transporter complex CcmAB involved in the biogenesis of c-type cytochromes; once thought to export heme, this seems not to be the case, but its exact role is uncertain. Responsible for energy coupling to the transport system. In Pseudomonas fluorescens (strain Pf0-1), this protein is Cytochrome c biogenesis ATP-binding export protein CcmA.